The primary structure comprises 214 residues: Osteoclast-stimulating factor 1 (214 aa).

The region spanning 12 to 71 (GQVKVFRALYTFEPRTPDELYFEEGDILYIADMSDTNWWKGTCKGKTGLIPSNYVAEQAE) is the SH3 domain. ANK repeat units lie at residues 72–101 (SIDN…GVNG), 105–135 (AGST…ELNQ), and 139–168 (LGDT…RTDL).

The protein localises to the cytoplasm. Its function is as follows. Induces bone resorption, acting probably through a signaling cascade which results in the secretion of factor(s) enhancing osteoclast formation and activity. The sequence is that of Osteoclast-stimulating factor 1 (ostf1) from Xenopus laevis (African clawed frog).